The sequence spans 502 residues: Archaemetzincin-1 (502 aa).

A Zn(2+)-binding site is contributed by histidine 262. Glutamate 263 functions as the Proton acceptor in the catalytic mechanism. Zn(2+) is bound by residues histidine 266, cysteine 273, cysteine 278, cysteine 297, and cysteine 300. Residues 336-383 form a disordered region; it reads GEPSVSEDTLPFSADSGMGCESDTEPVTSPSEPVTPDGWSHPFPDGPE.

The protein belongs to the peptidase M54 family. It depends on Zn(2+) as a cofactor.

Its function is as follows. Probable zinc metalloprotease. The sequence is that of Archaemetzincin-1 (Amz1) from Mus musculus (Mouse).